Here is an 81-residue protein sequence, read N- to C-terminus: MQMKATILIVLVALFMIQQSEAGWLRKAAKSVGKFYYKHKYYIKAAWQIGKHALGDMTDEEFQDFMKEVEQAREEELQSRQ.

The signal sequence occupies residues 1 to 22 (MQMKATILIVLVALFMIQQSEA). W24 bears the 6'-bromotryptophan mark. At R26 the chain carries 3,4-dihydroxyarginine. A 4,5-dihydroxylysine mark is found at K27, K30, and K34. 2 positions are modified to 3',4'-dihydroxyphenylalanine: Y36 and Y37. Position 38 is a 4,5-dihydroxylysine (K38). Position 40 is a 5-hydroxylysine (K40). Y41 and Y42 each carry 3',4'-dihydroxyphenylalanine. A 5-hydroxylysine modification is found at K44. L54 is modified (leucine amide). A propeptide spans 56–81 (DMTDEEFQDFMKEVEQAREEELQSRQ) (removed in mature form).

Post-translationally, contains L-DOPA (3',4'-dihydroxyphenylalanine). In terms of tissue distribution, hemocytes and pharyngeal tissues.

The protein resides in the secreted. Its function is as follows. Bactericidal against several Gram-positive and Gram-negative bacteria. Plays a significant role in the innate immune mechanisms of S.clava. The polypeptide is Styelin-D (Styela clava (Sea squirt)).